The chain runs to 352 residues: Threonine synthase (352 aa).

N6-(pyridoxal phosphate)lysine is present on Lys59. Pyridoxal 5'-phosphate contacts are provided by residues Asn85, 185 to 189 (GNAGN), and Thr314.

The protein belongs to the threonine synthase family. It depends on pyridoxal 5'-phosphate as a cofactor.

It carries out the reaction O-phospho-L-homoserine + H2O = L-threonine + phosphate. It functions in the pathway amino-acid biosynthesis; L-threonine biosynthesis; L-threonine from L-aspartate: step 5/5. Functionally, catalyzes the gamma-elimination of phosphate from L-phosphohomoserine and the beta-addition of water to produce L-threonine. This is Threonine synthase (thrC) from Bacillus sp. (strain ULM1).